Reading from the N-terminus, the 121-residue chain is Large ribosomal subunit protein bL12 (121 aa).

This sequence belongs to the bacterial ribosomal protein bL12 family. Homodimer. Part of the ribosomal stalk of the 50S ribosomal subunit. Forms a multimeric L10(L12)X complex, where L10 forms an elongated spine to which 2 to 4 L12 dimers bind in a sequential fashion. Binds GTP-bound translation factors.

Functionally, forms part of the ribosomal stalk which helps the ribosome interact with GTP-bound translation factors. Is thus essential for accurate translation. In Shewanella baltica (strain OS185), this protein is Large ribosomal subunit protein bL12.